A 453-amino-acid polypeptide reads, in one-letter code: Cytochrome P450 monooxygenase CYP2 (453 aa).

Residues 13–29 (MVITMLHGSSTYSLLAS) traverse the membrane as a helical segment. Asn-85 carries an N-linked (GlcNAc...) asparagine glycan. Cys-397 is a binding site for heme.

Belongs to the cytochrome P450 family. Heme is required as a cofactor.

It localises to the membrane. Its pathway is secondary metabolite biosynthesis. Its function is as follows. Cytochrome P450 monooxygenase; part of the gene cluster that mediates the biosynthesis of a tyrosine-derived cytochalasan acting as a fungal signal recognized by resistant rice plants and leads to avirulence in Pi33 resistant rice cultivars. The first step in the pathway is catalyzed by the hybrid PKS-NRPS ACE1, assisted by the enoyl reductase RAP1, that are responsible for fusion of the tyrosine precursor and the polyketide backbone. The polyketide synthase module (PKS) of ACE1 is responsible for the synthesis of the polyketide backbone and the downstream nonribosomal peptide synthetase (NRPS) amidates the carboxyl end of the polyketide with the tyrosine precursor. Because ACE1 lacks a designated enoylreductase (ER) domain, the required activity is provided the enoyl reductase RAP1. Reduction by the hydrolyase ORFZ, followed by dehydration and intra-molecular Diels-Alder cyclization by the Diels-Alderase ORF3 then yield the required isoindolone-fused macrocycle. A number of oxidative steps catalyzed by the tailoring enzymes identified within the cluster, including cytochrome P450 monooxygenases CYP1 to CYP4, the FAD-linked oxidoreductase OXR2 and the short-chain dehydrogenase/reductase OXR1, are further required to afford the final cytochalasans that confer avirulence and which have still to be identified. The monooxygenase CYP1 has been shown to be a site-selective C-18 hydroxylase whereas the function of CYP3 is the site-selective epoxidation of the C-6/C-7 olefin that is present in some intermediate compounds. Finally, SYN2 and RAP2 are not required for avirulence in Pi33 resistant rice cultivars. The protein is Cytochrome P450 monooxygenase CYP2 of Pyricularia oryzae (strain 70-15 / ATCC MYA-4617 / FGSC 8958) (Rice blast fungus).